Reading from the N-terminus, the 962-residue chain is Cohesin subunit psc3 (962 aa).

Residues Met-1 to Asn-72 are disordered. Residues Val-21–Met-30 show a composition bias toward polar residues. Residues Ser-51–Arg-71 are compositionally biased toward basic residues. A coiled-coil region spans residues Leu-236 to Leu-275. The 86-residue stretch at Phe-297–Met-382 folds into the SCD domain.

Belongs to the SCC3 family. As to quaternary structure, cohesin complexes are composed of the psm1/smc1 and psm3/smc3 heterodimer attached via their hinge domain, rad21/scc1 which link them, and psc3/scc3, which interacts with rad21. Interacts with swi6. The interaction with swi6 may contribute to recruit cohesin complex to heterochromatin.

It localises to the nucleus. The protein localises to the chromosome. The protein resides in the centromere. Functionally, component of cohesin complex, a complex required for the cohesion of sister chromatids after DNA replication. The cohesin complex apparently forms a large proteinaceous ring within which sister chromatids can be trapped. At anaphase, the rad21 subunit of the cohesin complex is cleaved and dissociates from chromatin, allowing sister chromatids to segregate. The cohesin complex may also play a role in spindle pole assembly during mitosis. This chain is Cohesin subunit psc3 (psc3), found in Schizosaccharomyces pombe (strain 972 / ATCC 24843) (Fission yeast).